The sequence spans 382 residues: Transcription factor MYB104 (382 aa).

HTH myb-type domains follow at residues 13 to 69 (KKTF…KPSL) and 70 to 120 (KKGP…MRLK). DNA-binding regions (H-T-H motif) lie at residues 41-65 (WTHV…MNHL) and 93-116 (WSQM…NARR). Positions 326 to 364 (IPKTDTSSESQLFQSSLRSHTDATPDIANTTGYVGSNER) are disordered. Polar residues-rich tracts occupy residues 329-343 (TDTS…SSLR) and 352-364 (IANT…SNER).

It is found in the nucleus. The chain is Transcription factor MYB104 (MYB104) from Arabidopsis thaliana (Mouse-ear cress).